Here is a 170-residue protein sequence, read N- to C-terminus: 2S seed storage protein 2 (170 aa).

The N-terminal stretch at 1–21 (MANKLFLVCATFALCFLLTNA) is a signal peptide. 2 consecutive propeptides follow at residues 22-37 (SIYRTVVEFDEDDASN) and 73-88 (GPSLDDEFDLEDDIEN).

Belongs to the 2S seed storage albumins family. As to quaternary structure, the mature protein consists of a small and a large chain linked by disulfide bonds.

Its function is as follows. This is a 2S seed storage protein. The polypeptide is 2S seed storage protein 2 (AT2S2) (Arabidopsis thaliana (Mouse-ear cress)).